Reading from the N-terminus, the 207-residue chain is Putative 3-methyladenine DNA glycosylase (207 aa).

Belongs to the DNA glycosylase MPG family.

The protein is Putative 3-methyladenine DNA glycosylase of Listeria monocytogenes serotype 4b (strain CLIP80459).